A 333-amino-acid polypeptide reads, in one-letter code: Uroporphyrinogen decarboxylase (333 aa).

Substrate-binding positions include Arg-22–Arg-26, Asp-71, Tyr-145, Ser-200, and His-310.

It belongs to the uroporphyrinogen decarboxylase family. Homodimer.

The protein localises to the cytoplasm. The catalysed reaction is uroporphyrinogen III + 4 H(+) = coproporphyrinogen III + 4 CO2. It participates in porphyrin-containing compound metabolism; protoporphyrin-IX biosynthesis; coproporphyrinogen-III from 5-aminolevulinate: step 4/4. Catalyzes the decarboxylation of four acetate groups of uroporphyrinogen-III to yield coproporphyrinogen-III. The sequence is that of Uroporphyrinogen decarboxylase from Thermoplasma acidophilum (strain ATCC 25905 / DSM 1728 / JCM 9062 / NBRC 15155 / AMRC-C165).